Consider the following 286-residue polypeptide: MMATPNQTACNAESPVALEEAKTSGAPGSPQTPPERHDSGGSLPLTPRMESHSEDEDLAGAVGGLGWNSRSPRTQSPGGCSAEAVLARKKHRRRPSKRKRHWRPYLELSWAEKQQRDERQSQRASRVREEMFAKGQPVAPYNTTQFLMNDRDPEEPNLDVPHGISHPGSSGESEAGDSDGRGRAHGEFQRKDFSETYERFHTESLQGRSKQELVRDYLELEKRLSQAEEETRRLQQLQACTGQQSCRQVEELAAEVQRLRTENQRLRQENQMWNREGCRCDEEPGT.

Residues methionine 1 to asparagine 11 are compositionally biased toward polar residues. The disordered stretch occupies residues methionine 1–glutamate 195. Serine 29 is subject to Phosphoserine. Residue threonine 32 is modified to Phosphothreonine. Residue serine 39 is modified to Phosphoserine. The residue at position 46 (threonine 46) is a Phosphothreonine. A phosphoserine mark is found at serine 51, serine 53, serine 71, serine 76, and serine 81. The segment covering asparagine 68–glycine 78 has biased composition (polar residues). Over residues alanine 87 to arginine 103 the composition is skewed to basic residues. A compositionally biased stretch (basic and acidic residues) spans lysine 113–phenylalanine 132. The interval proline 140 to threonine 143 is interaction with P-TEFb. Positions serine 178–glutamate 195 are enriched in basic and acidic residues. Positions glycine 207 to glycine 277 form a coiled coil. The tract at residues glutamine 226–threonine 286 is interaction with CCNT1, HEXIM1 and HEXIM2.

Belongs to the HEXIM family. As to quaternary structure, homooligomer and heterooligomer with HEXIM1; probably dimeric. Core component of the 7SK RNP complex, at least composed of 7SK RNA, LARP7, MEPCE, HEXIM1 (or HEXIM2) and P-TEFb (composed of CDK9 and CCNT1/cyclin-T1). Interacts with CCNT2. In terms of tissue distribution, ubiquitously expressed with higher expression in testis. HEXIM1 and HEXIM2 are differentially expressed.

It is found in the nucleus. Functionally, transcriptional regulator which functions as a general RNA polymerase II transcription inhibitor. Core component of the 7SK RNP complex: in cooperation with 7SK snRNA sequesters P-TEFb in a large inactive 7SK snRNP complex preventing RNA polymerase II phosphorylation and subsequent transcriptional elongation. The protein is Protein HEXIM2 (HEXIM2) of Homo sapiens (Human).